The chain runs to 354 residues: Protein RecA (354 aa).

Residue glycine 65–threonine 72 coordinates ATP.

Belongs to the RecA family.

Its subcellular location is the cytoplasm. Functionally, can catalyze the hydrolysis of ATP in the presence of single-stranded DNA, the ATP-dependent uptake of single-stranded DNA by duplex DNA, and the ATP-dependent hybridization of homologous single-stranded DNAs. It interacts with LexA causing its activation and leading to its autocatalytic cleavage. This Vibrio cholerae serotype O1 (strain ATCC 39315 / El Tor Inaba N16961) protein is Protein RecA.